The chain runs to 307 residues: GTPase Era (307 aa).

In terms of domain architecture, Era-type G spans 17 to 186 (RCGFVAIVGR…LELLKPYLPE (170 aa)). Residues 25-32 (GRPNVGKS) form a G1 region. GTP is bound at residue 25 to 32 (GRPNVGKS). The tract at residues 51-55 (QTTRN) is G2. The segment at 72-75 (DTPG) is G3. GTP contacts are provided by residues 72–76 (DTPGF) and 133–136 (NKID). The segment at 133–136 (NKID) is G4. The G5 stretch occupies residues 165-167 (VSA). Residues 217–293 (LGEELPYAMN…FLKVWVKVKS (77 aa)) enclose the KH type-2 domain.

The protein belongs to the TRAFAC class TrmE-Era-EngA-EngB-Septin-like GTPase superfamily. Era GTPase family. In terms of assembly, monomer.

It localises to the cytoplasm. Its subcellular location is the cell inner membrane. An essential GTPase that binds both GDP and GTP, with rapid nucleotide exchange. Plays a role in 16S rRNA processing and 30S ribosomal subunit biogenesis and possibly also in cell cycle regulation and energy metabolism. This chain is GTPase Era, found in Neisseria meningitidis serogroup C / serotype 2a (strain ATCC 700532 / DSM 15464 / FAM18).